The following is a 674-amino-acid chain: Acyl-coenzyme A oxidase acox-1.1 (674 aa).

Residues 149 to 152 (YAQT), 157 to 158 (GT), and glycine 191 each bind FAD. Substrate-binding positions include 285 to 288 (KINY) and arginine 295. Residues arginine 320 and 340 to 343 (QQHR) each bind FAD. ATP is bound by residues histidine 342, serine 392, histidine 396, and glutamine 404. FAD is bound at residue glycine 411. 433-434 (YE) lines the substrate pocket. Residue glutamate 434 is the Proton acceptor of the active site. Glutamate 436 is a binding site for FAD. ATP is bound by residues 533-536 (RASR) and tyrosine 581. The Microbody targeting signal motif lies at 672 to 674 (SKL).

It belongs to the acyl-CoA oxidase family. In terms of assembly, homodimer. Forms a heterodimer with acox-1.2. Forms a heterodimer with acox-1.3; the interaction may be important for the stability of acox-1.3. FAD is required as a cofactor. As to expression, expressed in hypodermis and intestine.

It is found in the peroxisome. The enzyme catalyses nonanoyl-CoA + O2 = (2E)-nonenoyl-CoA + H2O2. The catalysed reaction is dodecanoyl-CoA + O2 = (2E)-dodecenoyl-CoA + H2O2. It carries out the reaction a 2,3-saturated acyl-CoA + O2 = a (2E)-enoyl-CoA + H2O2. It catalyses the reaction heptanoyl-CoA + O2 = (2E)-heptenoyl-CoA + H2O2. The enzyme catalyses (8R)-8-hydroxynonanoyl-CoA + O2 = (2E,8R)-8-hydroxynonenoyl-CoA + H2O2. The catalysed reaction is pentanoyl-CoA + O2 = (2E)-pentenoyl-CoA + H2O2. It carries out the reaction hexadecanoyl-CoA + O2 = (2E)-hexadecenoyl-CoA + H2O2. It catalyses the reaction IC-asc-C7-CoA + O2 = IC-asc-DeltaC7-CoA + H2O2. The enzyme catalyses IC-asc-C9-CoA + O2 = IC-asc-DeltaC9-CoA + H2O2. The catalysed reaction is asc-omegaC5-CoA + O2 = asc-omegaDeltaC5-CoA + H2O2. It carries out the reaction asc-C7-CoA + O2 = asc-DeltaC7-CoA + H2O2. It catalyses the reaction asc-omegaC7-CoA + O2 = asc-omegaDeltaC7-CoA + H2O2. The enzyme catalyses asc-C9-CoA + O2 = asc-DeltaC9-CoA + H2O2. The catalysed reaction is asc-C13-CoA + O2 = asc-DeltaC13-CoA + H2O2. The protein operates within lipid metabolism; peroxisomal fatty acid beta-oxidation. Its activity is regulated as follows. Activated by ATP. ATP binding leads to a conformational change that promotes FAD cofactor binding and enzyme activity. ATP binding likely occurs during acox-1.1 folding and/or dimer formation. Its function is as follows. Involved in the first step of peroxisomal beta-oxidation by catalyzing the desaturation of fatty acid-derived side chains. Specifically, catalyzes the desaturation of fatty acids heptanoyl-CoA (C7), nonanoyl-CoA (C9), dodecanoyl-CoA (C12) and to a lesser extent pentanoyl-CoA (C5) and hexadecanoyl-CoA (C16), and hydroxylated fatty acid hydroxynonanoyl-CoA. Also, catalyzes the desaturation fatty acid-derived side chains of ascaroside pheromones, which regulates development and behavior. Specifically, shortens ascaroside with 5-carbon omega side chain (asc-omega-C5), 7-carbon side chain (asc-C7), 9-carbon side chain (asc-C9), 11-carbon side chain (asc-C11), 13-carbon side chain (asc-C13), 15-carbon side chain (asc-C15) and to a lesser extent ascarosides with 7-omega-carbon side chain (asc-omega-C7). Also shortens indol-3-carbonyl(IC)-ascarosides with 7-carbon side chain (IC-asc-C7) and to a lesser extent (IC)-ascarosides with 9-carbon side chain (IC-asc-C9). May associate and regulate the folding and/or the catalytic activity of other acyl-coenzyme A oxidases including acox-1.2, acox-1.3, acox-1.4 and acox-3 modulating the type of ascarosides produced. In association with acox-1.3, catalyzes the desaturation of asc-C7-CoA but not of fatty acids or hydroxylated fatty acids. Involved in the biosynthesis of asc-C6-MK (daumone 2) and asc-delta-C9 (daumone 3) but not asc-C7 (daumone 1); daumones are pheromones produced during unfavourable growth conditions which promote entry into the dauer stage. The sequence is that of Acyl-coenzyme A oxidase acox-1.1 from Caenorhabditis elegans.